A 462-amino-acid polypeptide reads, in one-letter code: Glycine--tRNA ligase (462 aa).

Residues Arg-100 and Glu-170 each coordinate substrate. Residues 202–204, 212–217, 287–288, and 331–334 each bind ATP; these read RNE, FRTREF, EL, and GVER. 217-221 is a substrate binding site; it reads FEQME. 327-331 serves as a coordination point for substrate; the sequence is EPSVG.

Belongs to the class-II aminoacyl-tRNA synthetase family. In terms of assembly, homodimer.

The protein localises to the cytoplasm. It carries out the reaction tRNA(Gly) + glycine + ATP = glycyl-tRNA(Gly) + AMP + diphosphate. Catalyzes the attachment of glycine to tRNA(Gly). This chain is Glycine--tRNA ligase, found in Malacoplasma penetrans (strain HF-2) (Mycoplasma penetrans).